The following is a 261-amino-acid chain: Cytochrome c oxidase subunit 3 (261 aa).

The Mitochondrial matrix segment spans residues 1 to 15 (MVHQSHAYHMLKPSP). A helical transmembrane segment spans residues 16–34 (WPLTGALSALLMTSGLAMW). Topologically, residues 35-40 (FHFHST) are mitochondrial intermembrane. The chain crosses the membrane as a helical span at residues 41–66 (TLLLTGMLTNALTMYQWWRDVVREST). At 67–72 (YQGHHT) the chain is on the mitochondrial matrix side. A helical transmembrane segment spans residues 73 to 105 (LPVQKGLRYGMILFITSEVFFFAGFFWAFYHSS). Residues 106-128 (LAPTPQLGGHWPPTGITPLNPLE) are Mitochondrial intermembrane-facing. Residues 129-152 (VPLLNTAVLLASGVSITWAHHSLM) form a helical membrane-spanning segment. The Mitochondrial matrix segment spans residues 153-155 (ENN). The helical transmembrane segment at 156 to 183 (RTQMIQALLITILLGIYFTLLQASEYIE) threads the bilayer. Topologically, residues 184–190 (APFTISD) are mitochondrial intermembrane. Residues 191 to 223 (GIYGSTFFMTTGFHGLHVIIGSTFLTVCLSCQL) form a helical membrane-spanning segment. Over 224–232 (LFHFTSKHH) the chain is Mitochondrial matrix. The helical transmembrane segment at 233-256 (FGFEAAAWYWHFVDVVWLFLYVSI) threads the bilayer. At 257 to 261 (YWWGS) the chain is on the mitochondrial intermembrane side.

This sequence belongs to the cytochrome c oxidase subunit 3 family. Component of the cytochrome c oxidase (complex IV, CIV), a multisubunit enzyme composed of 14 subunits. The complex is composed of a catalytic core of 3 subunits MT-CO1, MT-CO2 and MT-CO3, encoded in the mitochondrial DNA, and 11 supernumerary subunits COX4I, COX5A, COX5B, COX6A, COX6B, COX6C, COX7A, COX7B, COX7C, COX8 and NDUFA4, which are encoded in the nuclear genome. The complex exists as a monomer or a dimer and forms supercomplexes (SCs) in the inner mitochondrial membrane with NADH-ubiquinone oxidoreductase (complex I, CI) and ubiquinol-cytochrome c oxidoreductase (cytochrome b-c1 complex, complex III, CIII), resulting in different assemblies (supercomplex SCI(1)III(2)IV(1) and megacomplex MCI(2)III(2)IV(2)).

The protein resides in the mitochondrion inner membrane. The catalysed reaction is 4 Fe(II)-[cytochrome c] + O2 + 8 H(+)(in) = 4 Fe(III)-[cytochrome c] + 2 H2O + 4 H(+)(out). Its function is as follows. Component of the cytochrome c oxidase, the last enzyme in the mitochondrial electron transport chain which drives oxidative phosphorylation. The respiratory chain contains 3 multisubunit complexes succinate dehydrogenase (complex II, CII), ubiquinol-cytochrome c oxidoreductase (cytochrome b-c1 complex, complex III, CIII) and cytochrome c oxidase (complex IV, CIV), that cooperate to transfer electrons derived from NADH and succinate to molecular oxygen, creating an electrochemical gradient over the inner membrane that drives transmembrane transport and the ATP synthase. Cytochrome c oxidase is the component of the respiratory chain that catalyzes the reduction of oxygen to water. Electrons originating from reduced cytochrome c in the intermembrane space (IMS) are transferred via the dinuclear copper A center (CU(A)) of subunit 2 and heme A of subunit 1 to the active site in subunit 1, a binuclear center (BNC) formed by heme A3 and copper B (CU(B)). The BNC reduces molecular oxygen to 2 water molecules using 4 electrons from cytochrome c in the IMS and 4 protons from the mitochondrial matrix. This Pongo pygmaeus (Bornean orangutan) protein is Cytochrome c oxidase subunit 3 (MT-CO3).